We begin with the raw amino-acid sequence, 138 residues long: ATP synthase epsilon chain (138 aa).

The protein belongs to the ATPase epsilon chain family. As to quaternary structure, F-type ATPases have 2 components, CF(1) - the catalytic core - and CF(0) - the membrane proton channel. CF(1) has five subunits: alpha(3), beta(3), gamma(1), delta(1), epsilon(1). CF(0) has three main subunits: a, b and c.

The protein resides in the cell inner membrane. Functionally, produces ATP from ADP in the presence of a proton gradient across the membrane. This is ATP synthase epsilon chain from Ruthia magnifica subsp. Calyptogena magnifica.